The sequence spans 308 residues: Probable 5-dehydro-4-deoxyglucarate dehydratase (308 aa).

It belongs to the DapA family.

The enzyme catalyses 5-dehydro-4-deoxy-D-glucarate + H(+) = 2,5-dioxopentanoate + CO2 + H2O. Its pathway is carbohydrate acid metabolism; D-glucarate degradation; 2,5-dioxopentanoate from D-glucarate: step 2/2. The polypeptide is Probable 5-dehydro-4-deoxyglucarate dehydratase (Oceanobacillus iheyensis (strain DSM 14371 / CIP 107618 / JCM 11309 / KCTC 3954 / HTE831)).